The chain runs to 339 residues: F420-dependent glucose-6-phosphate dehydrogenase (339 aa).

Asp41 serves as a coordination point for coenzyme F420-(gamma-Glu)n. His42 acts as the Proton donor in catalysis. Coenzyme F420-(gamma-Glu)n is bound by residues Thr78 and 109–110 (TG). Catalysis depends on Glu111, which acts as the Proton acceptor. Coenzyme F420-(gamma-Glu)n-binding positions include Asn114, 177–178 (SG), and 180–181 (AA). The substrate site is built by Thr195, Lys198, Lys259, and Arg283.

Belongs to the F420-dependent glucose-6-phosphate dehydrogenase family. As to quaternary structure, homodimer.

The enzyme catalyses oxidized coenzyme F420-(gamma-L-Glu)(n) + D-glucose 6-phosphate + H(+) = 6-phospho-D-glucono-1,5-lactone + reduced coenzyme F420-(gamma-L-Glu)(n). In terms of biological role, catalyzes the coenzyme F420-dependent oxidation of glucose 6-phosphate (G6P) to 6-phosphogluconolactone. This chain is F420-dependent glucose-6-phosphate dehydrogenase, found in Nakamurella multipartita (strain ATCC 700099 / DSM 44233 / CIP 104796 / JCM 9543 / NBRC 105858 / Y-104) (Microsphaera multipartita).